The sequence spans 239 residues: MARTKKANDEVPTDSDSLKLKVAKQAAKLVKDEMVVGLGSGSTANLFIQELGKRIVEEELYIYGVPTSFDSRMVASTAGIPLISLDQCGEIDIAVDGADEVCKSTLSLIKGGGGCHTMEKIVDYHAKEFIVLADEGKLVDSLGDKTPVPLEVIPFAYSTILNKLLKMNTAPVIRTGSGKMGPVITDNGNMIIDVFISIDDAEETEIMLNNIPGVLENGVFSKCDKVLIGTSKKVEILKK.

Substrate contacts are provided by residues 40 to 43 (SGST), 96 to 99 (DGAD), and 110 to 113 (KGGG). The active-site Proton acceptor is glutamate 119. Residue lysine 137 coordinates substrate.

The protein belongs to the ribose 5-phosphate isomerase family. In terms of assembly, homodimer.

It catalyses the reaction aldehydo-D-ribose 5-phosphate = D-ribulose 5-phosphate. It functions in the pathway carbohydrate degradation; pentose phosphate pathway; D-ribose 5-phosphate from D-ribulose 5-phosphate (non-oxidative stage): step 1/1. In terms of biological role, catalyzes the reversible conversion of ribose-5-phosphate to ribulose 5-phosphate. The polypeptide is Ribose-5-phosphate isomerase A (Methanococcus maripaludis (strain C6 / ATCC BAA-1332)).